The following is a 386-amino-acid chain: Cytotoxic granule associated RNA binding protein TIA1 (386 aa).

Met-1 is subject to N-acetylmethionine. RRM domains follow at residues 7–83, 106–184, and 214–286; these read KTLY…WATT, FHVF…WATR, and CTVY…WGKE. The segment at 355–376 is disordered; it reads GPNYSVPPPQGQNGSMLPSQPA.

In terms of assembly, homooligomer; homooligomerization is induced by Zn(2+). Interacts with FASTK; the interactions leads to its phosphorylation. Interacts (via RRM1 and the C-terminal glutamine-rich (Q) sequence) with SNRPC/U1-C (via N-terminus); thereby facilitating spliceosomal U1 snRNP recruitment to 5' splice sites. In terms of processing, phosphorylatedby FASTK; phosphorylation occurs after FAS ligation in FAS-mediated apoptosis and before DNA fragmentation.

It localises to the nucleus. The protein localises to the cytoplasm. Its subcellular location is the stress granule. Its function is as follows. RNA-binding protein involved in the regulation of alternative pre-RNA splicing and mRNA translation by binding to uridine-rich (U-rich) RNA sequences. Binds to U-rich sequences immediately downstream from a 5' splice sites in a uridine-rich small nuclear ribonucleoprotein (U snRNP)-dependent fashion, thereby modulating alternative pre-RNA splicing. Preferably binds to the U-rich IAS1 sequence in a U1 snRNP-dependent manner; this binding is optimal if a 5' splice site is adjacent to IAS1. Activates the use of heterologous 5' splice sites; the activation depends on the intron sequence downstream from the 5' splice site, with a preference for a downstream U-rich sequence. By interacting with SNRPC/U1-C, promotes recruitment and binding of spliceosomal U1 snRNP to 5' splice sites followed by U-rich sequences, thereby facilitating atypical 5' splice site recognition by U1 snRNP. Activates splicing of alternative exons with weak 5' splice sites followed by a U-rich stretch on its own pre-mRNA and on TIAR mRNA. Acts as a modulator of alternative splicing for the apoptotic FAS receptor, thereby promoting apoptosis. Binds to the 5' splice site region of FAS intron 5 to promote accumulation of transcripts that include exon 6 at the expense of transcripts in which exon 6 is skipped, thereby leading to the transcription of a membrane-bound apoptotic FAS receptor, which promotes apoptosis. Binds to a conserved AU-rich cis element in COL2A1 intron 2 and modulates alternative splicing of COL2A1 exon 2. Also binds to the equivalent AT-rich element in COL2A1 genomic DNA, and may thereby be involved in the regulation of transcription. Involved in the repression of mRNA translation by binding to AU-rich elements (AREs) located in mRNA 3' untranslated regions (3' UTRs), including target ARE-bearing mRNAs encoding TNF and PTGS2. Also participates in the cellular response to environmental stress, by acting downstream of the stress-induced phosphorylation of EIF2S1/EIF2A to promote the recruitment of untranslated mRNAs to cytoplasmic stress granules (SGs), leading to stress-induced translational arrest. Formation and recruitment to SGs is regulated by Zn(2+). Possesses nucleolytic activity against cytotoxic lymphocyte target cells. This Mus musculus (Mouse) protein is Cytotoxic granule associated RNA binding protein TIA1 (Tia1).